Reading from the N-terminus, the 535-residue chain is Glutamate--cysteine ligase (535 aa).

The protein belongs to the glutamate--cysteine ligase type 1 family. Type 1 subfamily.

The catalysed reaction is L-cysteine + L-glutamate + ATP = gamma-L-glutamyl-L-cysteine + ADP + phosphate + H(+). It participates in sulfur metabolism; glutathione biosynthesis; glutathione from L-cysteine and L-glutamate: step 1/2. The sequence is that of Glutamate--cysteine ligase from Pseudomonas savastanoi pv. phaseolicola (strain 1448A / Race 6) (Pseudomonas syringae pv. phaseolicola (strain 1448A / Race 6)).